Reading from the N-terminus, the 307-residue chain is Probable RuBisCO transcriptional regulator (307 aa).

An HTH lysR-type domain is found at 5–62 (FTLQQLRIFKAIASEKSFTQAAEILFVSQPSLSKQIKTLENRLGILLLNRTGNKILLT). The segment at residues 22–41 (FTQAAEILFVSQPSLSKQIK) is a DNA-binding region (H-T-H motif).

Belongs to the LysR transcriptional regulatory family.

Its subcellular location is the plastid. The protein localises to the chloroplast. Functionally, trans-acting transcriptional regulator of RuBisCO genes (rbcL and rbcS) expression. This is Probable RuBisCO transcriptional regulator (rbcR-A) from Thalassiosira pseudonana (Marine diatom).